Here is a 355-residue protein sequence, read N- to C-terminus: 12-oxophytodienoate reductase-like protein (355 aa).

FMN-binding positions include 30–32 (ALT), alanine 63, and glutamine 105. Residue 175–178 (NASS) participates in substrate binding. Tyrosine 181 functions as the Proton donor in the catalytic mechanism. Arginine 265 is a substrate binding site. Residues glycine 288 and 309 to 310 (GR) contribute to the FMN site.

The protein belongs to the NADH:flavin oxidoreductase/NADH oxidase family. FMN is required as a cofactor. As to expression, weakly expressed in flowers and roots.

The protein localises to the cytoplasm. Functionally, may be involved in the biosynthesis or metabolism of oxylipin signaling molecules. The chain is 12-oxophytodienoate reductase-like protein (OPR2) from Solanum lycopersicum (Tomato).